Consider the following 204-residue polypeptide: MYVVAITGGIGSGKTTIANQFAELGIDVVDADVIAREVVEPGAPALAAIAAHFGPDVIAADGQLDRRSLRERVFSDPDAKVWLNALLHPLIRQEMFGRCAAAHSPYCLLVVPLLVENKLTGLANRVLVIDVDEATQIERTCRRDGVSREQVQAILAAQASRAERLAAADDVLDNKNGAPETIKPRILALHETYMAFASQQASQV.

The 198-residue stretch at 3-200 (VVAITGGIGS…ETYMAFASQQ (198 aa)) folds into the DPCK domain. 11–16 (GSGKTT) contributes to the ATP binding site.

The protein belongs to the CoaE family.

The protein localises to the cytoplasm. It carries out the reaction 3'-dephospho-CoA + ATP = ADP + CoA + H(+). It participates in cofactor biosynthesis; coenzyme A biosynthesis; CoA from (R)-pantothenate: step 5/5. In terms of biological role, catalyzes the phosphorylation of the 3'-hydroxyl group of dephosphocoenzyme A to form coenzyme A. This Aeromonas hydrophila protein is Dephospho-CoA kinase.